The primary structure comprises 143 residues: Transcriptional regulator MraZ (143 aa).

SpoVT-AbrB domains follow at residues 5–47 and 76–119; these read EYHH…SMEE and AMES…AKER.

Belongs to the MraZ family. In terms of assembly, forms oligomers.

It localises to the cytoplasm. The protein localises to the nucleoid. This is Transcriptional regulator MraZ from Lactobacillus helveticus (strain DPC 4571).